Reading from the N-terminus, the 580-residue chain is mRNA cap guanine-N(7) methyltransferase (580 aa).

Polar residues-rich tracts occupy residues 1–17 (MSGS…TSLI) and 25–53 (EATS…NSDL). The tract at residues 1 to 222 (MSGSKQGSEK…PVEAQPYSRL (222 aa)) is disordered. The segment covering 54-67 (KVTENKPKNTEMKP) has biased composition (basic and acidic residues). A compositionally biased stretch (polar residues) spans 69–90 (DPNTNASTTENTPITTSNAQVS). A compositionally biased stretch (basic and acidic residues) spans 102-154 (REPEEAQNRYDRYVPRVDNRRRGEPRVAEVRQDPRYAKYLRQDQEERRIRRPD). Residues 191-214 (ESEENGDEQQGDDEEETPGNEEPV) are compositionally biased toward acidic residues. The 309-residue stretch at 271-579 (SPIYKLRNFN…FYLGFAFEKL (309 aa)) folds into the mRNA cap 0 methyltransferase domain. Residue 280–281 (NN) participates in mRNA binding. S-adenosyl-L-methionine contacts are provided by lysine 284, cysteine 308, aspartate 330, aspartate 376, glutamine 406, and tyrosine 411.

It belongs to the class I-like SAM-binding methyltransferase superfamily. mRNA cap 0 methyltransferase family.

It localises to the nucleus. It catalyses the reaction a 5'-end (5'-triphosphoguanosine)-ribonucleoside in mRNA + S-adenosyl-L-methionine = a 5'-end (N(7)-methyl 5'-triphosphoguanosine)-ribonucleoside in mRNA + S-adenosyl-L-homocysteine. Its function is as follows. Responsible for methylating the 5'-cap structure of mRNAs. This Meyerozyma guilliermondii (strain ATCC 6260 / CBS 566 / DSM 6381 / JCM 1539 / NBRC 10279 / NRRL Y-324) (Yeast) protein is mRNA cap guanine-N(7) methyltransferase (ABD1).